Consider the following 1816-residue polypeptide: uncharacterized protein (1816 aa).

2 disordered regions span residues 338–357 (DSSS…NNNN) and 562–605 (ELEK…IKPK). A compositionally biased stretch (low complexity) spans 339 to 357 (SSSSSSNNNNNNNNNNNNN). The segment covering 562-577 (ELEKERIKKEKEDSKK) has biased composition (basic and acidic residues). The segment covering 581-603 (KQSSSSSSSSTTTTSTTTSSTIK) has biased composition (low complexity). Positions 826-999 (LDIVDKRESA…FLKKIDPNRK (174 aa)) constitute a Helicase ATP-binding domain. 839–846 (ASTSSGKT) is a binding site for ATP. A DEAH box motif is present at residues 949-952 (DEVH). The Helicase C-terminal domain occupies 1198–1379 (QLDLVIERFQ…SVVSPSLCLS (182 aa)). A disordered region spans residues 1388 to 1487 (TNGSANKSNE…TTTKTPTTTS (100 aa)). Over residues 1395–1427 (SNEENKVQVKENEKEREKEKEKEKEKEKEKETI) the composition is skewed to basic and acidic residues. Acidic residues predominate over residues 1445–1454 (NWDDDEEETA). A compositionally biased stretch (low complexity) spans 1456 to 1487 (STKTTPATTPTTTTTENTPATTTTTKTPTTTS).

Belongs to the helicase family. SKI2 subfamily.

The protein localises to the nucleus. This is an uncharacterized protein from Dictyostelium discoideum (Social amoeba).